The sequence spans 210 residues: Ribosomal RNA small subunit methyltransferase G (210 aa).

Residues Gly-76, Leu-81, 127–128 (VE), and Arg-142 contribute to the S-adenosyl-L-methionine site.

Belongs to the methyltransferase superfamily. RNA methyltransferase RsmG family.

Its subcellular location is the cytoplasm. It catalyses the reaction guanosine(527) in 16S rRNA + S-adenosyl-L-methionine = N(7)-methylguanosine(527) in 16S rRNA + S-adenosyl-L-homocysteine. Functionally, specifically methylates the N7 position of guanine in position 527 of 16S rRNA. The chain is Ribosomal RNA small subunit methyltransferase G from Aliivibrio fischeri (strain ATCC 700601 / ES114) (Vibrio fischeri).